A 202-amino-acid chain; its full sequence is Small ribosomal subunit protein uS4 (202 aa).

Positions 22-48 are disordered; that stretch reads TGKELARRPYAPGDHGQGRRGKLSEYG. One can recognise an S4 RNA-binding domain in the interval 93–154; sequence RRLDNMVYRL…KSKKLAVITG (62 aa).

It belongs to the universal ribosomal protein uS4 family. As to quaternary structure, part of the 30S ribosomal subunit. Contacts protein S5. The interaction surface between S4 and S5 is involved in control of translational fidelity.

One of the primary rRNA binding proteins, it binds directly to 16S rRNA where it nucleates assembly of the body of the 30S subunit. Its function is as follows. With S5 and S12 plays an important role in translational accuracy. This chain is Small ribosomal subunit protein uS4, found in Lactiplantibacillus plantarum (strain ATCC BAA-793 / NCIMB 8826 / WCFS1) (Lactobacillus plantarum).